Consider the following 228-residue polypeptide: MASAKSGERGSSSFAMACSLLSRYVRQNGAAAGELGLGIRGEADANKGKETMELFPQNSGFGSEAAAVKETPDAREQEKRQLTIFYGGKVLVFDDFPAEKAKDLMQMASKSSSTAQNCVLLPSSATATVADNTKVSAVPAPASALPVAQANAPKPVRPNAADLPQARKASLHRFLEKRKDRLQAKAPYQGSPSDASPVKKELQESQPWLGLGPQVAAPDLSLRQESSQ.

A Tify domain is found at 75–110 (REQEKRQLTIFYGGKVLVFDDFPAEKAKDLMQMASK). The short motif at 164-189 (PQARKASLHRFLEKRKDRLQAKAPYQ) is the Jas element. Residues 166-173 (ARKASLHR) carry the Nuclear localization signal motif. The disordered stretch occupies residues 175-228 (LEKRKDRLQAKAPYQGSPSDASPVKKELQESQPWLGLGPQVAAPDLSLRQESSQ).

This sequence belongs to the TIFY/JAZ family. In terms of assembly, interacts with COI1A and COI1B in a coronatine-dependent manner. Coronatine is an analog of jasmonoyl isoleucine (JA-Ile). Ubiquitinated. Targeted for degradation by the SCF(COI1) E3 ubiquitin ligase-proteasome pathway during jasmonate signaling.

Its subcellular location is the nucleus. Functionally, repressor of jasmonate responses. In Oryza sativa subsp. japonica (Rice), this protein is Protein TIFY 10a.